The sequence spans 760 residues: ATP-dependent zinc metalloprotease FtsH (760 aa).

Residues 1–5 (MNRKN) lie on the Cytoplasmic side of the membrane. A helical transmembrane segment spans residues 6-26 (VTRTITAIAVVVLLGWSFFYF). Over 27 to 110 (SDDTRGYKPV…KVSTVVNQGS (84 aa)) the chain is Extracellular. The helical transmembrane segment at 111 to 131 (ILGELLVYVLPLLLLVGLFVM) threads the bilayer. Topologically, residues 132–760 (FSRMQGGARM…EVSRTKPAHG (629 aa)) are cytoplasmic. Position 203 to 210 (203 to 210 (GPPGTGKT)) interacts with ATP. Residue histidine 425 participates in Zn(2+) binding. Residue glutamate 426 is part of the active site. 2 residues coordinate Zn(2+): histidine 429 and aspartate 501. The tract at residues 616 to 760 (DFGGRIPSDK…EVSRTKPAHG (145 aa)) is disordered. Residues 650–669 (AFKAAIAQATQAAEAARSDA) show a composition bias toward low complexity. The segment covering 740 to 750 (GSDESSAEQDD) has biased composition (acidic residues).

The protein in the central section; belongs to the AAA ATPase family. In the C-terminal section; belongs to the peptidase M41 family. In terms of assembly, homohexamer. It depends on Zn(2+) as a cofactor.

The protein localises to the cell membrane. In terms of biological role, acts as a processive, ATP-dependent zinc metallopeptidase for both cytoplasmic and membrane proteins. Plays a role in the quality control of integral membrane proteins. The polypeptide is ATP-dependent zinc metalloprotease FtsH (Mycobacterium tuberculosis (strain CDC 1551 / Oshkosh)).